We begin with the raw amino-acid sequence, 702 residues long: Phosphate acetyltransferase (702 aa).

Positions 375-702 (AFRYELIQRA…QATQSAADCG (328 aa)) are phosphate acetyltransferase.

The protein in the N-terminal section; belongs to the CobB/CobQ family. In the C-terminal section; belongs to the phosphate acetyltransferase and butyryltransferase family. Homohexamer.

The protein resides in the cytoplasm. The enzyme catalyses acetyl-CoA + phosphate = acetyl phosphate + CoA. The protein operates within metabolic intermediate biosynthesis; acetyl-CoA biosynthesis; acetyl-CoA from acetate: step 2/2. Functionally, involved in acetate metabolism. The chain is Phosphate acetyltransferase (pta) from Deinococcus radiodurans (strain ATCC 13939 / DSM 20539 / JCM 16871 / CCUG 27074 / LMG 4051 / NBRC 15346 / NCIMB 9279 / VKM B-1422 / R1).